The chain runs to 614 residues: Vitamin B12 transporter BtuB (614 aa).

Residues 1 to 20 (MIKKASLLTACSVTAFSAWA) form the signal peptide. Topologically, residues 21–157 (QDTSPDTLVV…NIITTRDEPG (137 aa)) are periplasmic. The TonB box motif lies at 26–33 (DTLVVTAN). The TBDR plug domain occupies 38–152 (PRSTVLAPTT…IGGVVNIITT (115 aa)). Cyanocob(III)alamin is bound by residues leucine 83, serine 85, asparagine 92, and 110–111 (VS). One can recognise a TBDR beta-barrel domain in the interval 155–614 (EPGTEISAGW…EYTLSGSYTF (460 aa)). A beta stranded membrane pass occupies residues 158–165 (TEISAGWG). Over 166-168 (SNS) the chain is Extracellular. A beta stranded membrane pass occupies residues 169–178 (YQNYDVSTQQ). Topologically, residues 179–183 (QLGDK) are periplasmic. Residues 184–195 (TRVTLLGDYAHT) traverse the membrane as a beta stranded segment. The Extracellular portion of the chain corresponds to 196-216 (HGYDVVAYGNTGTQAQTDNDG). The Ca(2+) site is built by aspartate 199, glutamine 211, aspartate 213, and aspartate 215. A beta stranded membrane pass occupies residues 217-227 (FLSKTLYGALE). Residues 228–231 (HNFT) lie on the Periplasmic side of the membrane. A beta stranded membrane pass occupies residues 232-248 (DAWSGFVRGYGYDNRTN). Residues tyrosine 249 and aspartate 250 each contribute to the Ca(2+) site. The Extracellular portion of the chain corresponds to 249 to 262 (YDAYYSPGSPLLDT). Alanine 251 contacts cyanocob(III)alamin. Aspartate 261 contributes to the Ca(2+) binding site. A beta stranded membrane pass occupies residues 263–277 (RKLYSQSWDAGLRYN). Position 278 (glycine 278) is a topological domain, periplasmic. The chain crosses the membrane as a beta stranded span at residues 279–296 (ELIKSQLITSYSHSKDYN). At 297–308 (YDPHYGRYDSSA) the chain is on the extracellular side. Threonine 309 provides a ligand contact to cyanocob(III)alamin. A beta stranded membrane pass occupies residues 309 to 325 (TLDEMKQYTVQWANNVI). Residues 326–327 (VG) are Periplasmic-facing. A beta stranded membrane pass occupies residues 328–337 (HGSIGAGVDW). Residues 338–352 (QKQTTTPGTGYVEDG) are Extracellular-facing. The beta stranded transmembrane segment at 353–369 (YDQRNTGIYLTGLQQVG) threads the bilayer. A topological domain (periplasmic) is located at residue aspartate 370. Residues 371–381 (FTFEGAARSDD) traverse the membrane as a beta stranded segment. Topologically, residues 382–384 (NSQ) are extracellular. The beta stranded transmembrane segment at 385–400 (FGRHGTWQTSAGWEFI) threads the bilayer. At 401–402 (EG) the chain is on the periplasmic side. A beta stranded transmembrane segment spans residues 403 to 417 (YRFIASYGTSYKAPN). At 418–433 (LGQLYGFYGNPNLDPE) the chain is on the extracellular side. The chain crosses the membrane as a beta stranded span at residues 434 to 443 (KSKQWEGAFE). Over 444-448 (GLTAG) the chain is Periplasmic. The beta stranded transmembrane segment at 449–458 (VNWRISGYRN) threads the bilayer. The Extracellular segment spans residues 459 to 472 (DVSDLIDYDDHTLK). Residues 473–490 (YYNEGKARIKGVEATANF) form a beta stranded membrane-spanning segment. Residues 491–493 (DTG) lie on the Periplasmic side of the membrane. Residues 494-509 (PLTHTVSYDYVDARNA) form a beta stranded membrane-spanning segment. Topologically, residues 510 to 516 (ITDTPLL) are extracellular. Arginine 517 is a cyanocob(III)alamin binding site. Residues 517–529 (RRAKQQVKYQLDW) traverse the membrane as a beta stranded segment. Topologically, residues 530-534 (QLYDF) are periplasmic. Residues 535–550 (DWGITYQYLGTRYDKD) form a beta stranded membrane-spanning segment. Tyrosine 551 is a cyanocob(III)alamin binding site. At 551–557 (YSSYPYQ) the chain is on the extracellular side. The beta stranded transmembrane segment at 558-572 (TVKMGGVSLWDLAVA) threads the bilayer. Over 573–584 (YPVTSHLTVRGK) the chain is Periplasmic. A beta stranded transmembrane segment spans residues 585 to 596 (IANLFDKDYETV). Residues 597 to 601 (YGYQT) lie on the Extracellular side of the membrane. The TonB C-terminal box signature appears at 597–614 (YGYQTAGREYTLSGSYTF). The chain crosses the membrane as a beta stranded span at residues 602–614 (AGREYTLSGSYTF).

Belongs to the TonB-dependent receptor family. BtuB (TC 1.B.14.3.1) subfamily. As to quaternary structure, interacts with TonB. (Microbial infection) The hairpin motif of the receptor-binding domain of colicin E3 (ColE3) interacts with BtuB without displacing BtuB's central plug. An N-terminal fragment of E3 binds OmpF; trimeric complexes with ColE3, BtuB and OmpF can be cross-linked and immunoprecipitated.

Its subcellular location is the cell outer membrane. Calcium increases vitamin B12 binding affinity by a factor of 50-100. Its activity is regulated as follows. (Microbial infection) Colicins E1, E3 and K inhibit cyanocobalamin (CN-B12) uptake; E1 and E3 inhibit binding of CN-B12 to cells while colicin K inhibits a later, energy-dependent step of CN-B12. Its function is as follows. Involved in the active translocation of vitamin B12 (cyanocobalamin) across the outer membrane to the periplasmic space. It derives its energy for transport by interacting with the trans-periplasmic membrane protein TonB. In terms of biological role, (Microbial infection) Acts as a receptor for bacteriophages BF23 and C1, and for A and E colicins. Cyanocobalamin (CN-B12) in solid medium protects against colicins E1 and E3. Does not act as the translocon for colicin E3 (ColE3). The translocon is OmpF; trimeric complexes with ColE3, BtuB and OmpF can be cross-linked and immunoprecipitated. The chain is Vitamin B12 transporter BtuB from Escherichia coli (strain K12).